Here is a 283-residue protein sequence, read N- to C-terminus: Probable replication-associated protein repA1 (283 aa).

The protein belongs to the IncFII RepA family.

This protein is essential for plasmid replication; it is involved in copy control functions. The protein is Probable replication-associated protein repA1 (repA1) of Buchnera aphidicola subsp. Acyrthosiphon pisum (strain APS) (Acyrthosiphon pisum symbiotic bacterium).